A 269-amino-acid polypeptide reads, in one-letter code: S-adenosylmethionine decarboxylase proenzyme (269 aa).

The active-site Schiff-base intermediate with substrate; via pyruvic acid is Ser118. Ser118 bears the Pyruvic acid (Ser); by autocatalysis mark. His123 serves as the catalytic Proton acceptor; for processing activity. The Proton donor; for catalytic activity role is filled by Cys146.

This sequence belongs to the prokaryotic AdoMetDC family. Type 2 subfamily. Heterooctamer of four alpha and four beta chains arranged as a tetramer of alpha/beta heterodimers. It depends on pyruvate as a cofactor. Is synthesized initially as an inactive proenzyme. Formation of the active enzyme involves a self-maturation process in which the active site pyruvoyl group is generated from an internal serine residue via an autocatalytic post-translational modification. Two non-identical subunits are generated from the proenzyme in this reaction, and the pyruvate is formed at the N-terminus of the alpha chain, which is derived from the carboxyl end of the proenzyme. The post-translation cleavage follows an unusual pathway, termed non-hydrolytic serinolysis, in which the side chain hydroxyl group of the serine supplies its oxygen atom to form the C-terminus of the beta chain, while the remainder of the serine residue undergoes an oxidative deamination to produce ammonia and the pyruvoyl group blocking the N-terminus of the alpha chain.

It catalyses the reaction S-adenosyl-L-methionine + H(+) = S-adenosyl 3-(methylsulfanyl)propylamine + CO2. Its pathway is amine and polyamine biosynthesis; S-adenosylmethioninamine biosynthesis; S-adenosylmethioninamine from S-adenosyl-L-methionine: step 1/1. In terms of biological role, catalyzes the decarboxylation of S-adenosylmethionine to S-adenosylmethioninamine (dcAdoMet), the propylamine donor required for the synthesis of the polyamines spermine and spermidine from the diamine putrescine. This is S-adenosylmethionine decarboxylase proenzyme from Brevibacillus brevis (strain 47 / JCM 6285 / NBRC 100599).